The following is a 1273-amino-acid chain: MEYRNIKYGTKTERRNYSKMNYDIELPNLIEIQTKSFELFLKEGIKKILKDISPIESNNGDLKLYFDDFYLDKPKYNIEEAKNRDITYYAQLFAKARLENVLTKEIKESNILITELPLITPSGTFIINGTERVVISQIVRSSGIYFTKKFDSKIRYLAQLIPTRGAWIEYEQSNKDFLYAKLDRSKKIPLNKFICCLGFDTKEKIESTFGYNKFLDLSLKKDQILNINEAIIELHSKLHRGEKVPVDVAREFIFSKLFYAKKYDLLAVGRYKFNQKLDVLKRIKNTYLAKDLIDPETNEIFLSKKTFLNEEIIEKLKNKRNCFTFELVNADNNLENEINEEILTYANYNKDKILELYIKDNIINIKTGEILVEKDTLITEQVMNIIRKNGQFIHDKVSKYFLCNKDLYQKHKERKGVFNEVLEVYILDNLGNPKPTIKVIGNIQSENNKQHITVSDIIASISYYLNLYEDIGKTDDIDHLGNRRLRLIGELLTNQFRLGLIISEKNIKDKMSISKFNNITVNSLVNFTSLSAIIKTFFNSSRLSHFMDQINPLAELTQKRRVSALGTGGIDRDRAGIEIRDINNSHYAKLCPIETPEGPSIGLIASLSTYARVDKYCFIQTPYLKVIKNEQGQPKVSEHIDYLTADQEEKEVIASVTYLNSDNTFKEKKIIARKNGETGLHEIDKITYIDVSPKQIVSVATSSIPFLEHNDASRALMGANMQRQAVPLLIPESPIVGTGIEHRIAKDSGCLILAKNSGYVTYADAQKIVITEKPKKTITINNEVIYKNEEEFNYEKAKILHKKNVFSCQTEYKLINFAKSNQDTLILQKPLVLDGDFVNKNDIITDGPATHKEELALGRNVTVAFMTWEGYNYEDAIIISEDLVKNDIYTSVHIDKYEIQTRELKKGAGVEQITREVPNVSAEAIKNLDERGIIIPGSEVKEGDILVGKITSQGMVEQTAYERLINVIIGEKSREHKDSSLRVPCGEGGIVQSVKYFSKENNDILPPEVNENIRVYIAKKRKIKEGDKIAGRHGNKGVISLILPKEDLPYMKDGTTIDIILNPLGVPSRMNIGQILEMHLGIAAQKLNIKVATPVFDGVNNDDLRKIIKEAKLSLDGKMTLYDGRTGEPFDSSISVGVMYMIKLSHMVEDKLHSRNIGPYTLMAQQPMGGRNQNGGQRFGEMEVWSLYAYGAANSLQEILTIKSDDIIGRQKTYSAITNGLPLPKPSIPESFRVFAKELQALGLYVELINSKTKENEILKSLVENQKKGSNNR.

It belongs to the RNA polymerase beta chain family. As to quaternary structure, the RNAP catalytic core consists of 2 alpha, 1 beta, 1 beta' and 1 omega subunit. When a sigma factor is associated with the core the holoenzyme is formed, which can initiate transcription.

It carries out the reaction RNA(n) + a ribonucleoside 5'-triphosphate = RNA(n+1) + diphosphate. Functionally, DNA-dependent RNA polymerase catalyzes the transcription of DNA into RNA using the four ribonucleoside triphosphates as substrates. This chain is DNA-directed RNA polymerase subunit beta, found in Phytoplasma mali (strain AT).